Here is a 331-residue protein sequence, read N- to C-terminus: DNA-directed RNA polymerase subunit alpha (331 aa).

The segment at 1-226 (MLIAQRPTLT…ELFGLCRELN (226 aa)) is alpha N-terminal domain (alpha-NTD). An alpha C-terminal domain (alpha-CTD) region spans residues 243–331 (TNPEMAVPIE…GGTFFSPEDE (89 aa)).

The protein belongs to the RNA polymerase alpha chain family. In terms of assembly, homodimer. The RNAP catalytic core consists of 2 alpha, 1 beta, 1 beta' and 1 omega subunit. When a sigma factor is associated with the core the holoenzyme is formed, which can initiate transcription.

It carries out the reaction RNA(n) + a ribonucleoside 5'-triphosphate = RNA(n+1) + diphosphate. Functionally, DNA-dependent RNA polymerase catalyzes the transcription of DNA into RNA using the four ribonucleoside triphosphates as substrates. The protein is DNA-directed RNA polymerase subunit alpha of Bifidobacterium longum (strain NCC 2705).